A 493-amino-acid chain; its full sequence is Cysteine sulfinic acid decarboxylase (493 aa).

An N6-(pyridoxal phosphate)lysine modification is found at Lys305.

It belongs to the group II decarboxylase family. Homodimer. Pyridoxal 5'-phosphate is required as a cofactor. As to expression, expressed in brain, liver and kidney.

It carries out the reaction L-aspartate + H(+) = beta-alanine + CO2. The catalysed reaction is 3-sulfino-L-alanine + H(+) = hypotaurine + CO2. It catalyses the reaction L-cysteate + H(+) = taurine + CO2. It functions in the pathway organosulfur biosynthesis; taurine biosynthesis; hypotaurine from L-cysteine: step 2/2. In terms of biological role, catalyzes the decarboxylation of L-aspartate, 3-sulfino-L-alanine (cysteine sulfinic acid), and L-cysteate to beta-alanine, hypotaurine and taurine, respectively. The preferred substrate is 3-sulfino-L-alanine. Does not exhibit any decarboxylation activity toward glutamate. The chain is Cysteine sulfinic acid decarboxylase (Csad) from Rattus norvegicus (Rat).